A 668-amino-acid chain; its full sequence is GTP-binding protein 1 (668 aa).

The interval 1 to 32 (MAAERSRSPVDSPVPASMFAPEPSSPGAARAA) is disordered. Phosphoserine is present on residues serine 6, serine 8, serine 12, serine 24, serine 25, serine 44, serine 47, and serine 69. The tr-type G domain maps to 158 to 389 (FLEVRVAVVG…LNLLSPRTSY (232 aa)). The segment at 167-174 (GNVDAGKS) is G1. A GTP-binding site is contributed by 167-174 (GNVDAGKS). Residues 206-210 (GRTSS) form a G2 region. Residues 252 to 255 (DLAG) form a G3 region. Residues 252–256 (DLAGH) and 308–311 (TKID) each bind GTP. Positions 308-311 (TKID) are G4. Positions 366-368 (SNV) are G5. The span at 573–595 (LLQTTNNSPMNSKPQQIKMQSTK) shows a compositional bias: polar residues. The segment at 573 to 668 (LLQTTNNSPM…GACVTPASGC (96 aa)) is disordered. Serine 580 carries the phosphoserine modification. The segment covering 609–619 (GVPAAGGPPTG) has biased composition (low complexity). A compositionally biased stretch (polar residues) spans 624 to 637 (SLGTAQAASTSGLQ). Residues 646–657 (GRRRGGQRHKVK) are compositionally biased toward basic residues.

The protein belongs to the TRAFAC class translation factor GTPase superfamily. Classic translation factor GTPase family. GTPBP1 subfamily. As to quaternary structure, interacts with EXOSC2/RRP4, EXOSC3/RRP40, EXOSC5/RRP46, HNRNPD, HNRNPR and SYNCRIP. Identified in a complex with AANAT mRNA, but does not bind mRNA by itself. Detected in some neurons in the brain cortex. Detected in small arteries, dendritic cells and macrophages in the thymus. Detected in lung bronchi, in bronchial epithelial cells and in bronchial smooth muscle cells. Detected in smooth muscle cells in a broad range of organs (at protein level). Expressed in brain, thymus, lung, and kidney.

Its subcellular location is the cytoplasm. Promotes degradation of target mRNA species. Plays a role in the regulation of circadian mRNA stability. Binds GTP and has GTPase activity. This chain is GTP-binding protein 1 (Gtpbp1), found in Mus musculus (Mouse).